Reading from the N-terminus, the 210-residue chain is Ribosomal RNA large subunit methyltransferase E (210 aa).

Residues glycine 55, tryptophan 57, aspartate 75, aspartate 93, and aspartate 117 each coordinate S-adenosyl-L-methionine. Lysine 157 serves as the catalytic Proton acceptor. The segment at 175–210 is disordered; sequence YRQVKTTKPPSSRKKSSEMYVVGLDFKPKKNKKSKD.

Belongs to the class I-like SAM-binding methyltransferase superfamily. RNA methyltransferase RlmE family.

The protein localises to the cytoplasm. The enzyme catalyses uridine(2552) in 23S rRNA + S-adenosyl-L-methionine = 2'-O-methyluridine(2552) in 23S rRNA + S-adenosyl-L-homocysteine + H(+). Its function is as follows. Specifically methylates the uridine in position 2552 of 23S rRNA at the 2'-O position of the ribose in the fully assembled 50S ribosomal subunit. The chain is Ribosomal RNA large subunit methyltransferase E from Methanobrevibacter smithii (strain ATCC 35061 / DSM 861 / OCM 144 / PS).